The chain runs to 157 residues: uncharacterized protein (157 aa).

This is an uncharacterized protein from Schizosaccharomyces pombe (strain 972 / ATCC 24843) (Fission yeast).